The sequence spans 182 residues: MASRGVNKVILVGNLGQDPEVRYMPNGGAVANITLATSESWRDKQTGEQKEKTEWHRVVLFGKLAEVAGEYLRKGSQVYIEGALQTRKWQDQSGQERYTTEVVVNVGGTMQMLGGRQGGGAPAGGGAAPQDGGAQGGWGQPQQPQGGNQFSGGQASRPAQPAPAAPQGGNEPPMDFDDDIPF.

Positions Val6–Gln111 constitute an SSB domain. Residues Trp55 to Phe61 mediate DNA binding. Residues Leu113–Phe182 are disordered. The span at Gly115–Gly139 shows a compositional bias: gly residues. Residues Gln140–Ala159 show a composition bias toward low complexity. The Important for interaction with partner proteins signature appears at Asp177 to Phe182.

As to quaternary structure, homotetramer.

Functionally, plays an important role in DNA replication, recombination and repair. Binds to ssDNA and to an array of partner proteins to recruit them to their sites of action during DNA metabolism. The protein is Single-stranded DNA-binding protein (ssb) of Yersinia pestis.